Here is a 321-residue protein sequence, read N- to C-terminus: Cytochrome c biogenesis protein CcsA (321 aa).

The next 8 helical transmembrane spans lie at 12 to 32 (HISF…LLVY), 45 to 62 (MIAT…RWIS), 71 to 91 (LYES…ILYI), 98 to 117 (LNAI…TSGL), 143 to 163 (MLLS…LIVI), 227 to 247 (VISL…VWAN), 260 to 277 (ETWA…LHTR), and 292 to 312 (VASI…LLGI).

This sequence belongs to the CcmF/CycK/Ccl1/NrfE/CcsA family. As to quaternary structure, may interact with Ccs1.

The protein resides in the plastid. It localises to the chloroplast thylakoid membrane. In terms of biological role, required during biogenesis of c-type cytochromes (cytochrome c6 and cytochrome f) at the step of heme attachment. This is Cytochrome c biogenesis protein CcsA from Phalaenopsis aphrodite subsp. formosana (Moth orchid).